The chain runs to 446 residues: 23S rRNA (uracil(1939)-C(5))-methyltransferase RlmD (446 aa).

The TRAM domain occupies 6–64 (KKLPQESITCEIESLSHEGRGVSHKDGKTLFVEGALPGETVTARYVNSRRSYDELAVEE). Positions 77, 83, 86, and 165 each coordinate [4Fe-4S] cluster. S-adenosyl-L-methionine contacts are provided by Gln275, Phe304, Asn309, Glu325, Asp352, and Asp377. The Nucleophile role is filled by Cys403.

This sequence belongs to the class I-like SAM-binding methyltransferase superfamily. RNA M5U methyltransferase family. RlmD subfamily.

The enzyme catalyses uridine(1939) in 23S rRNA + S-adenosyl-L-methionine = 5-methyluridine(1939) in 23S rRNA + S-adenosyl-L-homocysteine + H(+). Catalyzes the formation of 5-methyl-uridine at position 1939 (m5U1939) in 23S rRNA. This Hahella chejuensis (strain KCTC 2396) protein is 23S rRNA (uracil(1939)-C(5))-methyltransferase RlmD.